We begin with the raw amino-acid sequence, 469 residues long: Glutamine synthetase (469 aa).

Residues 14–98 enclose the GS beta-grasp domain; that stretch reads NDVKYVDLRF…VVCDVLEPTT (85 aa). In terms of domain architecture, GS catalytic spans 106–469; the sequence is PRGIAKKAMA…PVEFEMYYSV (364 aa). Residues Glu131 and Glu133 each contribute to the Mg(2+) site. ATP is bound at residue Glu209. The Mg(2+) site is built by Glu214 and Glu221. Residues 265-266 and Gly266 contribute to the L-glutamate site; that span reads NG. Residue His270 participates in Mg(2+) binding. Residues 272–274 and Ser274 contribute to the ATP site; that span reads HQS. Arg322, Glu328, and Arg340 together coordinate L-glutamate. Positions 340, 345, and 353 each coordinate ATP. A Mg(2+)-binding site is contributed by Glu358. Residue Arg360 coordinates L-glutamate. Tyr398 is modified (O-AMP-tyrosine).

Belongs to the glutamine synthetase family. As to quaternary structure, oligomer of 12 subunits arranged in the form of two hexameric ring. It depends on Mg(2+) as a cofactor.

It is found in the cytoplasm. It carries out the reaction L-glutamate + NH4(+) + ATP = L-glutamine + ADP + phosphate + H(+). With respect to regulation, the activity of this enzyme could be controlled by adenylation under conditions of abundant glutamine. Functionally, catalyzes the ATP-dependent biosynthesis of glutamine from glutamate and ammonia. The chain is Glutamine synthetase from Azorhizobium caulinodans (strain ATCC 43989 / DSM 5975 / JCM 20966 / LMG 6465 / NBRC 14845 / NCIMB 13405 / ORS 571).